Here is a 314-residue protein sequence, read N- to C-terminus: Acetyl-coenzyme A carboxylase carboxyl transferase subunit beta (314 aa).

The CoA carboxyltransferase N-terminal domain occupies 44–311; sequence LMNKCPHCGT…VETWQASSPL (268 aa). Positions 48, 51, 67, and 70 each coordinate Zn(2+). Residues 48 to 70 form a C4-type zinc finger; sequence CPHCGTIHYSKDLEKNLRVCKGC.

It belongs to the AccD/PCCB family. Acetyl-CoA carboxylase is a heterohexamer composed of biotin carboxyl carrier protein (AccB), biotin carboxylase (AccC) and two subunits each of ACCase subunit alpha (AccA) and ACCase subunit beta (AccD). Requires Zn(2+) as cofactor.

It localises to the cytoplasm. The catalysed reaction is N(6)-carboxybiotinyl-L-lysyl-[protein] + acetyl-CoA = N(6)-biotinyl-L-lysyl-[protein] + malonyl-CoA. It functions in the pathway lipid metabolism; malonyl-CoA biosynthesis; malonyl-CoA from acetyl-CoA: step 1/1. Its function is as follows. Component of the acetyl coenzyme A carboxylase (ACC) complex. Biotin carboxylase (BC) catalyzes the carboxylation of biotin on its carrier protein (BCCP) and then the CO(2) group is transferred by the transcarboxylase to acetyl-CoA to form malonyl-CoA. The protein is Acetyl-coenzyme A carboxylase carboxyl transferase subunit beta of Brevibacillus brevis (strain 47 / JCM 6285 / NBRC 100599).